Reading from the N-terminus, the 99-residue chain is Putative transmembrane protein ORF13 (99 aa).

Helical transmembrane passes span 8–28 (IATF…MAGI), 42–62 (LGLF…YIIV), and 73–93 (GPIT…AIIA).

The protein localises to the host membrane. The polypeptide is Putative transmembrane protein ORF13 (His1 virus (isolate Australia/Victoria) (His1V)).